Here is a 191-residue protein sequence, read N- to C-terminus: Protein Ves (191 aa).

It belongs to the Ves family.

This Shigella flexneri protein is Protein Ves.